Reading from the N-terminus, the 104-residue chain is Pyrimidine/purine nucleoside phosphorylase (104 aa).

Belongs to the nucleoside phosphorylase PpnP family.

It catalyses the reaction a purine D-ribonucleoside + phosphate = a purine nucleobase + alpha-D-ribose 1-phosphate. It carries out the reaction adenosine + phosphate = alpha-D-ribose 1-phosphate + adenine. The catalysed reaction is cytidine + phosphate = cytosine + alpha-D-ribose 1-phosphate. The enzyme catalyses guanosine + phosphate = alpha-D-ribose 1-phosphate + guanine. It catalyses the reaction inosine + phosphate = alpha-D-ribose 1-phosphate + hypoxanthine. It carries out the reaction thymidine + phosphate = 2-deoxy-alpha-D-ribose 1-phosphate + thymine. The catalysed reaction is uridine + phosphate = alpha-D-ribose 1-phosphate + uracil. The enzyme catalyses xanthosine + phosphate = alpha-D-ribose 1-phosphate + xanthine. In terms of biological role, catalyzes the phosphorolysis of diverse nucleosides, yielding D-ribose 1-phosphate and the respective free bases. Can use uridine, adenosine, guanosine, cytidine, thymidine, inosine and xanthosine as substrates. Also catalyzes the reverse reactions. The polypeptide is Pyrimidine/purine nucleoside phosphorylase (Geotalea uraniireducens (strain Rf4) (Geobacter uraniireducens)).